Reading from the N-terminus, the 158-residue chain is NAD(P)H-quinone oxidoreductase subunit J, chloroplastic (158 aa).

The protein belongs to the complex I 30 kDa subunit family. As to quaternary structure, NDH is composed of at least 16 different subunits, 5 of which are encoded in the nucleus.

It localises to the plastid. The protein localises to the chloroplast thylakoid membrane. The catalysed reaction is a plastoquinone + NADH + (n+1) H(+)(in) = a plastoquinol + NAD(+) + n H(+)(out). It catalyses the reaction a plastoquinone + NADPH + (n+1) H(+)(in) = a plastoquinol + NADP(+) + n H(+)(out). In terms of biological role, NDH shuttles electrons from NAD(P)H:plastoquinone, via FMN and iron-sulfur (Fe-S) centers, to quinones in the photosynthetic chain and possibly in a chloroplast respiratory chain. The immediate electron acceptor for the enzyme in this species is believed to be plastoquinone. Couples the redox reaction to proton translocation, and thus conserves the redox energy in a proton gradient. This is NAD(P)H-quinone oxidoreductase subunit J, chloroplastic from Ceratophyllum demersum (Rigid hornwort).